The chain runs to 493 residues: Solute carrier family 2, facilitated glucose transporter member 3 (493 aa).

The Cytoplasmic portion of the chain corresponds to Met-1–Leu-10. A helical transmembrane segment spans residues Val-11 to Asn-32. At Ala-33–Ser-64 the chain is on the extracellular side. Asn-43 carries N-linked (GlcNAc...) asparagine glycosylation. A helical membrane pass occupies residues Leu-65 to Val-85. Topologically, residues Asn-86–Arg-90 are cytoplasmic. The helical transmembrane segment at Arg-91 to Ala-111 threads the bilayer. Topologically, residues Lys-112 to Glu-118 are extracellular. Residues Met-119 to Ile-142 form a helical membrane-spanning segment. Residues Gly-143–Ala-153 lie on the Cytoplasmic side of the membrane. A helical membrane pass occupies residues Phe-154–Leu-174. Gln-159 serves as a coordination point for D-glucose. The Extracellular portion of the chain corresponds to Asp-175 to Leu-183. A helical transmembrane segment spans residues Trp-184–Phe-204. Residues Cys-205 to Pro-269 lie on the Cytoplasmic side of the membrane. Thr-232 carries the phosphothreonine modification. Residues Leu-270–Tyr-290 form a helical membrane-spanning segment. Positions Gln-277–Ser-279 are important for selectivity against fructose. Residues Gln-280 to Gln-281 and Asn-286 each bind D-glucose. The Extracellular segment spans residues Tyr-291–Pro-304. A helical membrane pass occupies residues Ile-305–Leu-325. Asn-315 lines the D-glucose pocket. The Cytoplasmic portion of the chain corresponds to Val-326–Arg-331. Residues Arg-332 to Ser-352 form a helical membrane-spanning segment. The Extracellular portion of the chain corresponds to Leu-353 to Ser-363. The helical transmembrane segment at Phe-364–Val-389 threads the bilayer. D-glucose is bound by residues Glu-378 and Trp-386. Topologically, residues Ala-390–Pro-399 are cytoplasmic. Residues Ala-400–Phe-420 traverse the membrane as a helical segment. The Extracellular portion of the chain corresponds to Pro-421–Ala-429. A helical transmembrane segment spans residues Tyr-430–Val-450. Over Pro-451 to Ala-493 the chain is Cytoplasmic. Phosphoserine is present on residues Ser-471, Ser-475, and Ser-482. Thr-489 bears the Phosphothreonine mark.

The protein belongs to the major facilitator superfamily. Sugar transporter (TC 2.A.1.1) family. Glucose transporter subfamily. As to quaternary structure, interacts with SMIM43; the interaction may promote SLC2A3-mediated glucose transport to meet the energy needs of mesendoderm differentiation. In terms of tissue distribution, brain and osteoblastic cells (at protein level). Highly expressed in brain.

It is found in the cell membrane. Its subcellular location is the perikaryon. The protein resides in the cell projection. The catalysed reaction is D-glucose(out) = D-glucose(in). The enzyme catalyses D-galactose(in) = D-galactose(out). Its activity is regulated as follows. Deoxyglucose transport is inhibited by D-glucose, D-galactose and maltose. Galactose transport is inhibited by D-glucose and maltose. Facilitative glucose transporter. Can also mediate the uptake of various other monosaccharides across the cell membrane. Mediates the uptake of glucose, 2-deoxyglucose, galactose, mannose, xylose and fucose, and probably also dehydroascorbate. Does not mediate fructose transport. Required for mesendoderm differentiation. This chain is Solute carrier family 2, facilitated glucose transporter member 3, found in Rattus norvegicus (Rat).